The chain runs to 353 residues: Peroxidase C1A (353 aa).

A signal peptide spans 1–30 (MHFSSSSTLFTCITLIPLVCLILHASLSDA). Gln31 is modified (pyrrolidone carboxylic acid). 4 disulfide bridges follow: Cys41-Cys121, Cys74-Cys79, Cys127-Cys331, and Cys207-Cys239. A glycan (N-linked (GlcNAc...) asparagine) is linked at Asn43. Catalysis depends on His72, which acts as the Proton acceptor. Asp73, Val76, Gly78, Asp80, and Ser82 together coordinate Ca(2+). Asn87 is a glycosylation site (N-linked (GlcNAc...) asparagine). Glu94 is a Ca(2+) binding site. Substrate is bound at residue Pro169. Asn188 is a glycosylation site (N-linked (GlcNAc...) asparagine). His200 contributes to the heme b binding site. Thr201 contacts Ca(2+). N-linked (GlcNAc...) asparagine glycans are attached at residues Asn216, Asn228, and Asn244. Residues Asp252, Thr255, and Asp260 each coordinate Ca(2+). Residues Asn285 and Asn298 are each glycosylated (N-linked (GlcNAc...) asparagine). The propeptide occupies 339–353 (LLHDMVEVVDFVSSM).

This sequence belongs to the peroxidase family. Classical plant (class III) peroxidase subfamily. As to quaternary structure, monomer. Ca(2+) is required as a cofactor. Heme b serves as cofactor.

It is found in the secreted. Its subcellular location is the vacuole. The enzyme catalyses 2 a phenolic donor + H2O2 = 2 a phenolic radical donor + 2 H2O. Functionally, removal of H(2)O(2), oxidation of toxic reductants, biosynthesis and degradation of lignin, suberization, auxin catabolism, response to environmental stresses such as wounding, pathogen attack and oxidative stress. These functions might be dependent on each isozyme/isoform in each plant tissue. The protein is Peroxidase C1A (PRXC1A) of Armoracia rusticana (Horseradish).